The chain runs to 196 residues: Imidazoleglycerol-phosphate dehydratase (196 aa).

Belongs to the imidazoleglycerol-phosphate dehydratase family.

The protein localises to the cytoplasm. It carries out the reaction D-erythro-1-(imidazol-4-yl)glycerol 3-phosphate = 3-(imidazol-4-yl)-2-oxopropyl phosphate + H2O. It participates in amino-acid biosynthesis; L-histidine biosynthesis; L-histidine from 5-phospho-alpha-D-ribose 1-diphosphate: step 6/9. The sequence is that of Imidazoleglycerol-phosphate dehydratase from Clostridium botulinum (strain Kyoto / Type A2).